We begin with the raw amino-acid sequence, 567 residues long: Delta(24)-sterol reductase (567 aa).

The Lumenal segment spans residues 1 to 24 (MSDLEAPLRPKRKKIWVDYFVKFR). A helical; Signal-anchor membrane pass occupies residues 25–45 (WILVIFVVLPISFTLYFLTYL). An FAD-binding PCMH-type domain is found at 45 to 231 (LGDVRSEWKS…VAAEVKLIPI (187 aa)). Residues 46–567 (GDVRSEWKSF…AYPEVDQPPD (522 aa)) lie on the Cytoplasmic side of the membrane. The segment at 520-541 (CRRKYGAVGTFMSVYYKCKKGR) is interaction with calmodulin. The interval 548–567 (REAEQAHLDTAYPEVDQPPD) is disordered.

Belongs to the DIMINUTO family. In terms of tissue distribution, highly expressed in the apical region and root tips and lower levels in immature and mature internodes and leaves.

It is found in the membrane. The enzyme catalyses lathosterol + NADP(+) = 5alpha-cholesta-7,24-dien-3beta-ol + NADPH + H(+). Plays a critical role in the general process of plant cell elongation. This chain is Delta(24)-sterol reductase (DIM), found in Pisum sativum (Garden pea).